The chain runs to 464 residues: tRNA modification GTPase MnmE (464 aa).

(6S)-5-formyl-5,6,7,8-tetrahydrofolate-binding residues include R25, E87, and K130. One can recognise a TrmE-type G domain in the interval 226–386 (GLSVVLAGQP…LRAELLRIAG (161 aa)). N236 serves as a coordination point for K(+). GTP contacts are provided by residues 236 to 241 (NVGKSS), 255 to 261 (TPIAGTT), and 280 to 283 (DTAG). S240 provides a ligand contact to Mg(2+). K(+) is bound by residues T255, I257, and T260. T261 contributes to the Mg(2+) binding site. K464 is a (6S)-5-formyl-5,6,7,8-tetrahydrofolate binding site.

This sequence belongs to the TRAFAC class TrmE-Era-EngA-EngB-Septin-like GTPase superfamily. TrmE GTPase family. In terms of assembly, homodimer. Heterotetramer of two MnmE and two MnmG subunits. K(+) serves as cofactor.

The protein resides in the cytoplasm. Functionally, exhibits a very high intrinsic GTPase hydrolysis rate. Involved in the addition of a carboxymethylaminomethyl (cmnm) group at the wobble position (U34) of certain tRNAs, forming tRNA-cmnm(5)s(2)U34. The protein is tRNA modification GTPase MnmE of Burkholderia ambifaria (strain ATCC BAA-244 / DSM 16087 / CCUG 44356 / LMG 19182 / AMMD) (Burkholderia cepacia (strain AMMD)).